The sequence spans 407 residues: Serine/threonine transporter SstT (407 aa).

A run of 9 helical transmembrane segments spans residues 12-32 (GNLI…GISS), 42-62 (LGIL…FILI), 81-101 (IIIL…LANF), 141-161 (ALSS…GIAL), 179-199 (VLKI…GLVA), 218-238 (ILLV…IVFF), 245-267 (FPLI…SSAA), 288-308 (ISIP…IAIL), and 330-350 (IIAT…LLLI).

This sequence belongs to the dicarboxylate/amino acid:cation symporter (DAACS) (TC 2.A.23) family.

It is found in the cell inner membrane. It catalyses the reaction L-serine(in) + Na(+)(in) = L-serine(out) + Na(+)(out). It carries out the reaction L-threonine(in) + Na(+)(in) = L-threonine(out) + Na(+)(out). Its function is as follows. Involved in the import of serine and threonine into the cell, with the concomitant import of sodium (symport system). The sequence is that of Serine/threonine transporter SstT from Campylobacter jejuni subsp. jejuni serotype O:23/36 (strain 81-176).